The following is a 482-amino-acid chain: MKRLFSKSLCTSAAGANLKPPPADSAAIAKLILSSPNTTHQDDQFLLSTKTTPWTPNLVNSVLKRLWNHGPKALQFFHFLDNHHREYVHDASSFDLAIDIAARLHLHPTVWSLIHRMRSLRIGPSPKTFAIVAERYASAGKPDKAVKLFLNMHEHGCFQDLASFNTILDVLCKSKRVEKAYELFRALRGRFSVDTVTYNVILNGWCLIKRTPKALEVLKEMVERGINPNLTTYNTMLKGFFRAGQIRHAWEFFLEMKKRDCEIDVVTYTTVVHGFGVAGEIKRARNVFDEMIREGVLPSVATYNAMIQVLCKKDNVENAVVMFEEMVRRGYEPNVTTYNVLIRGLFHAGEFSRGEELMQRMENEGCEPNFQTYNMMIRYYSECSEVEKALGLFEKMGSGDCLPNLDTYNILISGMFVRKRSEDMVVAGKLLLEMVERGFIPRKFTFNRVLNGLLLTGNQAFAKEILRLQSKSGSRLLRKFRL.

11 PPR repeats span residues 90 to 124, 125 to 159, 160 to 190, 194 to 228, 229 to 263, 264 to 298, 299 to 333, 334 to 368, 369 to 403, 404 to 441, and 442 to 476; these read DASS…RIGP, SPKT…GCFQ, DLAS…LRGR, DTVT…GINP, NLTT…DCEI, DVVT…GVLP, SVAT…GYEP, NVTT…GCEP, NFQT…DCLP, NLDT…GFIP, and RKFT…GSRL.

This sequence belongs to the PPR family. P subfamily.

The protein resides in the mitochondrion. Required for the trans-splicing of intron 1 of the mitochondrial nad1 transcript encoding the ND1 subunit of the mitochondrial membrane respiratory chain NADH dehydrogenase (Complex I). The protein is Pentatricopeptide repeat-containing protein At1g74900, mitochondrial (OTP43) of Arabidopsis thaliana (Mouse-ear cress).